The primary structure comprises 454 residues: Nucleoprotein (454 aa).

The disordered stretch occupies residues 1–62 (MSFVPGQENA…ATTQPNSGSV (62 aa)). Residues 10 to 23 (AGGRSSSGNRAGNG) are compositionally biased toward low complexity. A compositionally biased stretch (polar residues) spans 50–61 (KQTATTQPNSGS). The interval 56 to 197 (QPNSGSVVPH…GFYVEGSGRS (142 aa)) is RNA-binding. Residues 64 to 193 (PHYSWFSGIT…VLPQGFYVEG (130 aa)) enclose the CoV N NTD domain. Positions 109 and 125 each coordinate RNA. Disordered regions lie at residues 160–179 (TRSD…PTRF), 186–230 (PQGF…STVK), 271–292 (PRQK…KRGP), and 382–428 (DGGA…RELT). Residue serine 162 is modified to Phosphoserine; by host. Residue arginine 167 coordinates RNA. Position 170 is a phosphoserine; by host (serine 170). The residue at position 177 (threonine 177) is a Phosphothreonine; by host. Over residues 193–212 (GSGRSAPASRSGSRSQSRGP) the composition is skewed to low complexity. Serine 194 bears the Phosphoserine; by host mark. Over residues 215-227 (RARSSSNQRQPAS) the composition is skewed to polar residues. The 124-residue stretch at 260–383 (AKEVRQKILN…ENLNAYQKDG (124 aa)) folds into the CoV N CTD domain. The tract at residues 267-383 (ILNKPRQKRT…ENLNAYQKDG (117 aa)) is dimerization. Phosphoserine; by host is present on residues serine 389 and serine 424. Position 428 is a phosphothreonine; by host (threonine 428).

The protein belongs to the betacoronavirus nucleocapsid protein family. As to quaternary structure, homooligomer. Both monomeric and oligomeric forms interact with RNA. Interacts with protein M. Interacts with NSP3; this interaction serves to tether the genome to the newly translated replicase-transcriptase complex at a very early stage of infection. In terms of processing, ADP-ribosylated. The ADP-ribosylation is retained in the virion during infection. Post-translationally, phosphorylated on serine and threonine residues.

It localises to the virion. The protein resides in the host endoplasmic reticulum-Golgi intermediate compartment. It is found in the host Golgi apparatus. Functionally, major structural component of virions that associates with genomic RNA to form a long, flexible, helical nucleocapsid. Interaction with the M protein leads to the formation of virus particles. Binds to cellular membranes and phospholipids. Elicits cell-mediated immunity. May play roles in viral transcription and translation, and/or replication. Induces transcription of the prothrombinase (FGL2) and elevates procoagulant activity. In terms of biological role, packages the positive strand viral genome RNA into a helical ribonucleocapsid (RNP) and plays a fundamental role during virion assembly through its interactions with the viral genome and membrane protein M. Plays an important role in enhancing the efficiency of subgenomic viral RNA transcription as well as viral replication. The polypeptide is Nucleoprotein (Mus musculus (Mouse)).